The sequence spans 50 residues: Putative protein HokF (50 aa).

Residues 5 to 25 form a helical membrane-spanning segment; sequence YALVAVIVLCLTVPGFTLLVG.

This sequence belongs to the Hok/Gef family.

Its subcellular location is the cell inner membrane. Its function is as follows. Toxic component of a type I toxin-antitoxin (TA) system. When overexpressed kills cells within minutes; causes collapse of the transmembrane potential and arrest of respiration. Its toxic effect is probably neutralized by an antisense antitoxin Sok RNA. The chain is Putative protein HokF (hokF) from Escherichia coli O157:H7.